The primary structure comprises 439 residues: Adenylosuccinate synthetase (439 aa).

GTP-binding positions include 12 to 18 and 40 to 42; these read GDEGKGK and GHT. Asp13 (proton acceptor) is an active-site residue. The Mg(2+) site is built by Asp13 and Gly40. IMP contacts are provided by residues 13 to 16, 38 to 41, Thr137, Arg151, Gln232, Thr247, and Arg311; these read DEGK and NAGH. His41 functions as the Proton donor in the catalytic mechanism. 307-313 lines the substrate pocket; that stretch reads ATTGRPR. GTP contacts are provided by residues Arg313, 339-341, and 421-423; these read KLD and SNG.

This sequence belongs to the adenylosuccinate synthetase family. As to quaternary structure, homodimer. Mg(2+) is required as a cofactor.

The protein localises to the cytoplasm. The catalysed reaction is IMP + L-aspartate + GTP = N(6)-(1,2-dicarboxyethyl)-AMP + GDP + phosphate + 2 H(+). The protein operates within purine metabolism; AMP biosynthesis via de novo pathway; AMP from IMP: step 1/2. In terms of biological role, plays an important role in the de novo pathway of purine nucleotide biosynthesis. Catalyzes the first committed step in the biosynthesis of AMP from IMP. This chain is Adenylosuccinate synthetase, found in Salinibacter ruber (strain DSM 13855 / M31).